The sequence spans 285 residues: Malonyl-[acyl-carrier protein] O-methyltransferase (285 aa).

This sequence belongs to the methyltransferase superfamily.

It catalyses the reaction malonyl-[ACP] + S-adenosyl-L-methionine = malonyl-[ACP] methyl ester + S-adenosyl-L-homocysteine. Its pathway is cofactor biosynthesis; biotin biosynthesis. Converts the free carboxyl group of a malonyl-thioester to its methyl ester by transfer of a methyl group from S-adenosyl-L-methionine (SAM). It allows to synthesize pimeloyl-ACP via the fatty acid synthetic pathway. The sequence is that of Malonyl-[acyl-carrier protein] O-methyltransferase from Bacillus cytotoxicus (strain DSM 22905 / CIP 110041 / 391-98 / NVH 391-98).